The sequence spans 86 residues: ATP synthase epsilon chain (86 aa).

Belongs to the ATPase epsilon chain family. In terms of assembly, F-type ATPases have 2 components, CF(1) - the catalytic core - and CF(0) - the membrane proton channel. CF(1) has five subunits: alpha(3), beta(3), gamma(1), delta(1), epsilon(1). CF(0) has three main subunits: a, b and c.

Its subcellular location is the cell inner membrane. Produces ATP from ADP in the presence of a proton gradient across the membrane. In Caulobacter vibrioides (strain ATCC 19089 / CIP 103742 / CB 15) (Caulobacter crescentus), this protein is ATP synthase epsilon chain (atpC).